A 140-amino-acid chain; its full sequence is Large ribosomal subunit protein uL11 (140 aa).

The protein belongs to the universal ribosomal protein uL11 family. As to quaternary structure, part of the ribosomal stalk of the 50S ribosomal subunit. Interacts with L10 and the large rRNA to form the base of the stalk. L10 forms an elongated spine to which L12 dimers bind in a sequential fashion forming a multimeric L10(L12)X complex. Post-translationally, one or more lysine residues are methylated.

Forms part of the ribosomal stalk which helps the ribosome interact with GTP-bound translation factors. The polypeptide is Large ribosomal subunit protein uL11 (Desulfovibrio desulfuricans (strain ATCC 27774 / DSM 6949 / MB)).